A 531-amino-acid chain; its full sequence is T-complex protein 1 subunit zeta (531 aa).

Residue Ala-2 is modified to N-acetylalanine. An N6-acetyllysine modification is found at Lys-5. Gly-39 is an ADP binding site. Gly-39 lines the ATP pocket. Asp-90 serves as a coordination point for Mg(2+). ADP-binding residues include Gly-91, Thr-92, Thr-93, Ser-94, Thr-158, and Lys-159. ATP contacts are provided by Gly-91, Thr-92, and Thr-93. Residue Lys-199 is modified to N6-acetyllysine. Ser-205 is subject to Phosphoserine. Residue Lys-251 forms a Glycyl lysine isopeptide (Lys-Gly) (interchain with G-Cter in SUMO2) linkage. Residues Lys-287, Lys-365, Lys-377, and Lys-388 each carry the N6-acetyllysine modification. ADP is bound at residue Ala-411. 4 residues coordinate ATP: Ala-411, Gly-412, Asp-496, and Lys-501. An ADP-binding site is contributed by Asp-496.

Belongs to the TCP-1 chaperonin family. As to quaternary structure, component of the chaperonin-containing T-complex (TRiC), a hexadecamer composed of two identical back-to-back stacked rings enclosing a protein folding chamber. Each ring is made up of eight different subunits: TCP1/CCT1, CCT2, CCT3, CCT4, CCT5, CCT6A/CCT6, CCT7, CCT8. Interacts with PACRG.

The protein resides in the cytoplasm. The catalysed reaction is ATP + H2O = ADP + phosphate + H(+). Component of the chaperonin-containing T-complex (TRiC), a molecular chaperone complex that assists the folding of actin, tubulin and other proteins upon ATP hydrolysis. The TRiC complex mediates the folding of WRAP53/TCAB1, thereby regulating telomere maintenance. The protein is T-complex protein 1 subunit zeta (CCT6) of Pongo abelii (Sumatran orangutan).